The chain runs to 234 residues: Small ribosomal subunit protein uS3 (234 aa).

Positions 39 to 107 (IRKFLKKELY…EVSINIKEVK (69 aa)) constitute a KH type-2 domain.

Belongs to the universal ribosomal protein uS3 family. Part of the 30S ribosomal subunit. Forms a tight complex with proteins S10 and S14.

In terms of biological role, binds the lower part of the 30S subunit head. Binds mRNA in the 70S ribosome, positioning it for translation. This chain is Small ribosomal subunit protein uS3, found in Helicobacter pylori (strain J99 / ATCC 700824) (Campylobacter pylori J99).